Reading from the N-terminus, the 702-residue chain is MPALAVDAAAPVAHAFACDAARFPAPLLGPAAAAAAVAEKPDAAAWSADLSSALYNVDGWGAPYFFVNDDGDVAVRPHGAATLPGQEIDLAKVVAKAAGPRSGGGLGLPLPLLVRFPDVLRHRVEALNAAFDYAVRSTGYGGRYQGVYPVKCNQDRHVVEDIVEFGEPFRFGLEAGSKPELLLAMSCLAARGNPDALLICNGYKDDEYVSLALIARTMGLNTVIVLEQEEELDIVVDASRRLGVRPVVGMRAKLRTKHAGHFGSTSGEKGKFGLNAAQILSVVAKLKTLGMLDCLQLLHFHIGSQIPTTALLGDGVGEAAQIYCELARLGAAMRVIDVGGGLGIDYDGSHSAQTDMSVAYSLEEYAAAVVAAVGRVCDRKGVAHPIICSESGRALVSHHSVLVFEAFSASAPGRIDPATGYLLDELTDDCHADYRNLMAAAVRGDFDTCALYADQLKRRCADQFKDGVLGLEHLAAVDSLCEIVARGMGAAEPPRTYHINLSVFTSLPDMWAIGQMFPIIPIQRLGERPAVDGVLSDLTCDSDGKVDHFIGGRHSLPLHELPVHGTRGYYLGMFLGGAYQEALGGLHNLFGGPSVVRVSQSDGPHCFAVTRAAAGPSCADVLRSMQHEPEVMFEVLKQRTDGATAAALARAFGAMPYLSFDPEAAAMASGESSGMSSDSEGSAAGAAEEDDDEWEFMRGLTV.

Position 151 is an N6-(pyridoxal phosphate)lysine (Lys151). 336–346 serves as a coordination point for substrate; that stretch reads IDVGGGLGIDY. Residues 668 to 686 show a composition bias toward low complexity; it reads ASGESSGMSSDSEGSAAGA. The tract at residues 668–702 is disordered; it reads ASGESSGMSSDSEGSAAGAAEEDDDEWEFMRGLTV.

This sequence belongs to the Orn/Lys/Arg decarboxylase class-II family. SpeA subfamily. It depends on pyridoxal 5'-phosphate as a cofactor. Requires Mg(2+) as cofactor. Expressed in roots, leaves and stems (at protein level).

The catalysed reaction is L-arginine + H(+) = agmatine + CO2. Its pathway is amine and polyamine biosynthesis; agmatine biosynthesis; agmatine from L-arginine: step 1/1. In Oryza sativa subsp. japonica (Rice), this protein is Arginine decarboxylase 1 (ADC1).